A 520-amino-acid polypeptide reads, in one-letter code: Alkyl hydroperoxide reductase subunit F (520 aa).

213–228 (DVLVVGGGPAGAAAAI) contacts FAD. A disulfide bond links Cys343 and Cys346. 355–369 (RVAVIGGGNSGVEAA) is a binding site for NAD(+). 476–486 (TSIPGVFAAGD) provides a ligand contact to FAD.

The protein belongs to the class-II pyridine nucleotide-disulfide oxidoreductase family. In terms of assembly, homodimer. It depends on FAD as a cofactor.

In terms of biological role, serves to protect the cell against DNA damage by alkyl hydroperoxides. It can use either NADH or NADPH as electron donor for direct reduction of redox dyes or of alkyl hydroperoxides when combined with the AhpC protein. The chain is Alkyl hydroperoxide reductase subunit F (ahpF) from Pseudomonas putida (Arthrobacter siderocapsulatus).